We begin with the raw amino-acid sequence, 160 residues long: Fimbrial protein (160 aa).

Positions 1–7 (MKSLQKG) are cleaved as a propeptide — leader sequence. Phenylalanine 8 carries the N-methylphenylalanine modification. A helical transmembrane segment spans residues 8–28 (FTLIELMIVVAIIGILAAFAI).

The protein belongs to the N-Me-Phe pilin family. As to quaternary structure, the pili are polar flexible filaments of about 5.4 nanometers diameter and 2.5 micrometers average length; they consist of only a single polypeptide chain arranged in a helical configuration of five subunits per turn in the assembled pilus.

Its subcellular location is the fimbrium. The protein localises to the membrane. The polypeptide is Fimbrial protein (fimA) (Dichelobacter nodosus (Bacteroides nodosus)).